The sequence spans 1009 residues: Glutamate receptor ionotropic, delta-2 (1009 aa).

An N-terminal signal peptide occupies residues 1 to 23 (MKVFPAVLFLITFWSLEWEPVLP). Over 24–566 (DSIIHIGAIF…DMFACLAPFD (543 aa)) the chain is Extracellular. N-linked (GlcNAc...) asparagine glycans are attached at residues Asn-293, Asn-306, Asn-390, and Asn-426. Glu-531, Val-534, and Asp-535 together coordinate Ca(2+). Residues 567–587 (LSLWACIAGTVLLVGTLVYLL) traverse the membrane as a helical segment. The Cytoplasmic segment spans residues 588-635 (NWLNPPRLPMGSVSSTTLYNSMWFVYGSFVQQGGEVPYTTLATRMMMG). A helical transmembrane segment spans residues 636–656 (VWWLFALIVISSYTANLAAFL). Topologically, residues 657–830 (TISRIENSIQ…KSGSALDIHS (174 aa)) are extracellular. The N-linked (GlcNAc...) asparagine glycan is linked to Asn-713. Ca(2+) contacts are provided by Asp-753, Asp-755, and Ser-757. The chain crosses the membrane as a helical span at residues 831–851 (FAGVFFVLAAGVVLSCLIATV). Residues 852–1009 (ETWWTRRKGS…GNDPDRGTSI (158 aa)) lie on the Cytoplasmic side of the membrane. A disordered region spans residues 989–1009 (YQPTPAPNFSYGNDPDRGTSI).

Belongs to the glutamate-gated ion channel (TC 1.A.10.1) family. GRID2 subfamily. Tetramer; dimer of dimers. As to expression, expressed in cerebellar Purkinje cells, in crest cells in the medial octavolateral nucleus and in type I neurons of the optic tectum.

It is found in the postsynaptic cell membrane. It carries out the reaction Ca(2+)(in) = Ca(2+)(out). The catalysed reaction is Na(+)(in) = Na(+)(out). Functionally, member of the ionotropic glutamate receptor family, which plays a crucial role in synaptic organization and signal transduction in the central nervous system. Although it shares structural features with ionotropic glutamate receptors, does not bind glutamate as a primary ligand. Promotes synaptogenesis and mediates the D-Serine-dependent long term depression signals and AMPA receptor endocytosis of cerebellar parallel fiber-Purkinje cell (PF-PC) synapses through the NRX1B-CBLN1-GRID2 triad complex. In the presence of neurexins and cerebellins, forms cation-selective channels that are proposed to be gated by glycine and D-serine. However, recent research disputes this ligand-gated cation channel activity. Cation-selective ion channel activity can be triggered by GRM1 in Purkinje cells. This is Glutamate receptor ionotropic, delta-2 from Danio rerio (Zebrafish).